The primary structure comprises 318 residues: Cytochrome f (318 aa).

A signal peptide spans 1 to 34; it reads MKNNYLANLIKTLQAIVVSVALLAPLVLPSAVNA. 4 residues coordinate heme: Phe-35, Cys-55, Cys-58, and His-59. Residues 284-304 traverse the membrane as a helical segment; it reads VKGLIAFFFTVILAQILLVLK.

This sequence belongs to the cytochrome f family. The 4 large subunits of the cytochrome b6-f complex are cytochrome b6, subunit IV (17 kDa polypeptide, petD), cytochrome f and the Rieske protein, while the 4 small subunits are PetG, PetL, PetM and PetN. The complex functions as a dimer. Heme is required as a cofactor.

Its subcellular location is the plastid. The protein localises to the chloroplast thylakoid membrane. In terms of biological role, component of the cytochrome b6-f complex, which mediates electron transfer between photosystem II (PSII) and photosystem I (PSI), cyclic electron flow around PSI, and state transitions. The protein is Cytochrome f of Rhodomonas salina (Cryptomonas salina).